Here is a 245-residue protein sequence, read N- to C-terminus: MIIPAIDLIDGQVVRLYQGDYAQQTTFNLSPLDQLKSYQQQGASLLHIVDLTGAKEPDRRQTALISELVNNLDTPIQVGGGIRTEAQLSELLEIGVSRVVIGSLAVKEPELVKSWFTKYGSDAICLALDVNINEQGEKIVAVSGWQSGGGKSLESLVEEFKSVGLKHALVTDISRDGTLKGANTELYYEIATLYPEIQWQASGGIATLDDVNAVKQSGATGIIIGKALLINQFTVEEAIACWPNA.

Catalysis depends on Asp7, which acts as the Proton acceptor. The Proton donor role is filled by Asp129.

The protein belongs to the HisA/HisF family.

It localises to the cytoplasm. It carries out the reaction 1-(5-phospho-beta-D-ribosyl)-5-[(5-phospho-beta-D-ribosylamino)methylideneamino]imidazole-4-carboxamide = 5-[(5-phospho-1-deoxy-D-ribulos-1-ylimino)methylamino]-1-(5-phospho-beta-D-ribosyl)imidazole-4-carboxamide. The protein operates within amino-acid biosynthesis; L-histidine biosynthesis; L-histidine from 5-phospho-alpha-D-ribose 1-diphosphate: step 4/9. The sequence is that of 1-(5-phosphoribosyl)-5-[(5-phosphoribosylamino)methylideneamino] imidazole-4-carboxamide isomerase from Shewanella pealeana (strain ATCC 700345 / ANG-SQ1).